The chain runs to 875 residues: MGDSDDEYDRRRRDKFRRERSDYDRSRERDERRRGDDWNDREWDRGRERRSRGEYRDYDRNRRERFSPPRHELSPPQKRMRRDWDEHSSDPYHSGYDMPYAGGGGGPTYGPPQPWGHPDVHIMQHHVLPIQARLGSIAEIDLGVPPPIMKSFKEFLLSLDDSVDETEAVKRYNDYKLDFRRQQMQDFFLAHKDEEWFRSKYHPDEVGKRRQEARGALQNRLKVFLSLMESGWFDNLLLDIDKADAIVKMLDAAVIKMEGGTENDLRILEQEEEEEQAGKTGEASKKEEARAGPALGEGERKANDKDEKKEDGKQAENDSSNDDKTKKSEGDGDKEEKKEEAEKEAKKSKKRNRKQSGDDSFDEGSVSESESESEGGQAEEEKEEAEEALKEKEKPKEEEKEKPKDAAGLECKPRPLHKTCSLFMRNIAPNISRAEIISLCKRYPGFMRVALSEPQPERRFFRRGWVTFDRSVNIKEICWNLQNIRLRECELSPGVNRDLTRRVRNINGITQHKQIVRNDIKLAAKLIHTLDDRTQLWASEPGTPPVPTSLPSQNPILKNITDYLIEEVSAEEEELLGSSGGPPPEEPPKEGNPAEINVERDEKLIKVLDKLLLYLRIVHSLDYYNTCEYPNEDEMPNRCGIIHVRGPMPPNRISHGEVLEWQKTFEEKLTPLLSVRESLSEEEAQKMGRKDPEQEVEKFVTSNTQELGKDKWLCPLSGKKFKGPEFVRKHIFNKHAEKIEEVKKEVAFFNNFLTDAKRPALPEIKPAQPPGPAQILPPGLTPGLPYPHQTPQGLMPYGQPRPPILGYGAGAVRPAVPTGGPPYPHAPYGAGRGNYDAFRGQGGYPGKPRNRMVRGDPRAIVEYRDLDAPDDVDFF.

Positions 1-90 (MGDSDDEYDR…RRDWDEHSSD (90 aa)) are disordered. At G2 the chain carries N-acetylglycine. S4 carries the post-translational modification Phosphoserine. Y8 bears the Phosphotyrosine mark. Residues 8 to 73 (YDRRRRDKFR…ERFSPPRHEL (66 aa)) are compositionally biased toward basic and acidic residues. Residues S67, S74, and S136 each carry the phosphoserine modification. Residue K150 forms a Glycyl lysine isopeptide (Lys-Gly) (interchain with G-Cter in SUMO2) linkage. The tract at residues 272 to 411 (EEEEQAGKTG…KPKDAAGLEC (140 aa)) is disordered. Basic and acidic residues predominate over residues 297 to 345 (EGERKANDKDEKKEDGKQAENDSSNDDKTKKSEGDGDKEEKKEEAEKEA). Residues 369–386 (SESESEGGQAEEEKEEAE) are compositionally biased toward acidic residues. Positions 387–411 (EALKEKEKPKEEEKEKPKDAAGLEC) are enriched in basic and acidic residues. S492 and S539 each carry phosphoserine. Phosphothreonine is present on T543. S569 is subject to Phosphoserine. The interval 571-597 (EEEELLGSSGGPPPEEPPKEGNPAEIN) is disordered. At T670 the chain carries Phosphothreonine. A Phosphoserine modification is found at S678. Omega-N-methylarginine occurs at positions 832, 839, and 849. The tract at residues 834 to 853 (NYDAFRGQGGYPGKPRNRMV) is disordered.

Belongs to the ARS2 family. In terms of assembly, interacts with CASP8AP2 and ERBB4. Interacts with NCBP1/CBP80 and DROSHA. Interacts with LUZP4. Interacts with NCBP2/CBP20 and NCBP3. Interacts with MTREX. Widely expressed, with a preference for proliferating cells. Highly expressed in hematopoietic tissues and reduced or absent expression in parenchymal organs like liver and kidney. In the brain, expressed in the subventricular zone by niche astrocytes, ependymal cells and neural stem cells. In this cerebral context, expressed in slowly dividing cells.

The protein resides in the nucleus. It is found in the nucleoplasm. The protein localises to the cytoplasm. Acts as a mediator between the cap-binding complex (CBC) and the primary microRNAs (miRNAs) processing machinery during cell proliferation. Contributes to the stability and delivery of capped primary miRNA transcripts to the primary miRNA processing complex containing DGCR8 and DROSHA, thereby playing a role in RNA-mediated gene silencing (RNAi) by miRNAs. Binds capped RNAs (m7GpppG-capped RNA); however interaction is probably mediated via its interaction with NCBP1/CBP80 component of the CBC complex. Involved in cell cycle progression at S phase. Does not directly confer arsenite resistance but rather modulates arsenic sensitivity. Independently of its activity on miRNAs, necessary and sufficient to promote neural stem cell self-renewal. Does so by directly binding SOX2 promoter and positively regulating its transcription. The sequence is that of Serrate RNA effector molecule homolog (Srrt) from Mus musculus (Mouse).